We begin with the raw amino-acid sequence, 360 residues long: uncharacterized protein (360 aa).

Position 4 to 22 (4 to 22 (KVLHIGAGGFGERWCDTFL)) interacts with NAD(+).

Functionally, could be a NAD-dependent oxidoreductase. This is an uncharacterized protein from Sinorhizobium fredii (strain NBRC 101917 / NGR234).